A 337-amino-acid chain; its full sequence is Protein-methionine-sulfoxide reductase catalytic subunit MsrP (337 aa).

Positions 1-50 (MLIKLPSASGSKESDVTPESIYLSRRTLLASSLAGLAVTALPRWASAADA) form a signal peptide, tat-type signal. Mo-molybdopterin is bound by residues Asn-94, 97 to 98 (YE), Cys-152, Thr-187, Asn-237, Arg-242, and 253 to 255 (SVK).

It belongs to the MsrP family. As to quaternary structure, heterodimer of a catalytic subunit (MsrP) and a heme-binding subunit (MsrQ). Mo-molybdopterin serves as cofactor. Predicted to be exported by the Tat system. The position of the signal peptide cleavage has not been experimentally proven.

The protein resides in the periplasm. It carries out the reaction L-methionyl-[protein] + a quinone + H2O = L-methionyl-(S)-S-oxide-[protein] + a quinol. The catalysed reaction is L-methionyl-[protein] + a quinone + H2O = L-methionyl-(R)-S-oxide-[protein] + a quinol. Functionally, part of the MsrPQ system that repairs oxidized periplasmic proteins containing methionine sulfoxide residues (Met-O), using respiratory chain electrons. Thus protects these proteins from oxidative-stress damage caused by reactive species of oxygen and chlorine generated by the host defense mechanisms. MsrPQ is essential for the maintenance of envelope integrity under bleach stress, rescuing a wide series of structurally unrelated periplasmic proteins from methionine oxidation. The catalytic subunit MsrP is non-stereospecific, being able to reduce both (R-) and (S-) diastereoisomers of methionine sulfoxide. This Pseudomonas syringae pv. tomato (strain ATCC BAA-871 / DC3000) protein is Protein-methionine-sulfoxide reductase catalytic subunit MsrP.